Here is a 438-residue protein sequence, read N- to C-terminus: Glycerol-3-phosphate acyltransferase 3 (438 aa).

Residues 14–34 traverse the membrane as a helical segment; that stretch reads WLTLVGGLILLPSAFGLSLGI. Phosphoserine is present on residues Ser-68 and Ser-77. The next 2 helical transmembrane spans lie at 137–157 and 161–181; these read ISPR…CFLL and VTLA…VGQL. The HXXXXD motif motif lies at 229-234; it reads HTSPID.

It belongs to the 1-acyl-sn-glycerol-3-phosphate acyltransferase family. Most abundant in epididymal fat, followed by small intestine, brown adipose tissue, kidney, heart and colon.

The protein resides in the endoplasmic reticulum membrane. It catalyses the reaction sn-glycerol 3-phosphate + an acyl-CoA = a 1-acyl-sn-glycero-3-phosphate + CoA. The catalysed reaction is a 1-acyl-sn-glycero-3-phosphate + an acyl-CoA = a 1,2-diacyl-sn-glycero-3-phosphate + CoA. The enzyme catalyses dodecanoyl-CoA + sn-glycerol 3-phosphate = 1-dodecanoyl-sn-glycerol 3-phosphate + CoA. It carries out the reaction sn-glycerol 3-phosphate + hexadecanoyl-CoA = 1-hexadecanoyl-sn-glycero-3-phosphate + CoA. It catalyses the reaction sn-glycerol 3-phosphate + (9Z)-octadecenoyl-CoA = 1-(9Z-octadecenoyl)-sn-glycero-3-phosphate + CoA. The catalysed reaction is (9Z,12Z)-octadecadienoyl-CoA + sn-glycerol 3-phosphate = 1-(9Z,12Z)-octadecadienoyl-sn-glycero-3-phosphate + CoA. The enzyme catalyses 1-tetradecanoyl-sn-glycerol 3-phosphate + (9Z)-octadecenoyl-CoA = 1-tetradecanoyl-2-(9Z)-octadecenoyl-sn-glycero-3-phosphate + CoA. It carries out the reaction 1-hexadecanoyl-sn-glycero-3-phosphate + (9Z)-octadecenoyl-CoA = 1-hexadecanoyl-2-(9Z-octadecenoyl)-sn-glycero-3-phosphate + CoA. It catalyses the reaction 1-(9Z-octadecenoyl)-sn-glycero-3-phosphate + (9Z)-octadecenoyl-CoA = 1,2-di-(9Z-octadecenoyl)-sn-glycero-3-phosphate + CoA. The catalysed reaction is 1-(6Z,9Z,12Z-octadecatrienoyl)-sn-glycero-3-phosphate + (9Z)-octadecenoyl-CoA = (6Z,9Z,12Z)-octadecatrienoyl-2-(9Z)-octadecenoyl-sn-glycero-3-phosphate + CoA. The enzyme catalyses 1-(9Z,12Z,15Z)-octadecatrienoyl-sn-glycero-3-phosphate + (9Z)-octadecenoyl-CoA = 1-(9Z,12Z,15Z)-octadecatrienoyl-2-(9Z)-octadecenoyl-sn-glycero-3-phosphate + CoA. It carries out the reaction 1-(9Z-octadecenoyl)-sn-glycero-3-phosphate + tetradecanoyl-CoA = 1-(9Z)-octadecenoyl-2-tetradecanoyl-sn-glycero-3-phosphate + CoA. It catalyses the reaction 1-(9Z-octadecenoyl)-sn-glycero-3-phosphate + hexadecanoyl-CoA = 1-(9Z)-octadecenoyl-2-hexadecanoyl-sn-glycero-3-phosphate + CoA. The catalysed reaction is 1-(9Z-octadecenoyl)-sn-glycero-3-phosphate + octadecanoyl-CoA = 1-(9Z-octadecenoyl)-2-octadecanoyl-sn-glycero-3-phosphate + CoA. The enzyme catalyses 1-(9Z-octadecenoyl)-sn-glycero-3-phosphate + (9Z,12Z)-octadecadienoyl-CoA = 1-(9Z)-octadecenoyl-2-(9Z,12Z)-octadecadienoyl-sn-glycero-3-phosphate + CoA. It carries out the reaction 1-(5Z,8Z,11Z,14Z-eicosatetraenoyl)-sn-glycero-3-phosphate + (9Z)-octadecenoyl-CoA = 1-(5Z,8Z,11Z,14Z)-eicosatetraenoyl-2-(9Z)-octadecenoyl-sn-glycero-3-phosphate + CoA. Its pathway is glycerolipid metabolism; triacylglycerol biosynthesis. It participates in phospholipid metabolism; CDP-diacylglycerol biosynthesis; CDP-diacylglycerol from sn-glycerol 3-phosphate: step 1/3. Functionally, converts glycerol-3-phosphate to 1-acyl-sn-glycerol-3-phosphate (lysophosphatidic acid or LPA) by incorporating an acyl moiety at the sn-1 position of the glycerol backbone. Also converts LPA into 1,2-diacyl-sn-glycerol-3-phosphate (phosphatidic acid or PA) by incorporating an acyl moiety at the sn-2 position of the glycerol backbone. Protects cells against lipotoxicity. The sequence is that of Glycerol-3-phosphate acyltransferase 3 from Mus musculus (Mouse).